Consider the following 513-residue polypeptide: Na(+)/H(+) antiporter NhaB (513 aa).

The next 11 helical transmembrane spans lie at 23 to 43 (LALIIFLILNPLIFIISPFVA), 52 to 72 (IFTLAMALKCYPLLPGGLLAI), 97 to 117 (LLLMFMVAGIYFMKQLLLFIF), 144 to 164 (FLDALTVVAVVISVAVGFYGI), 202 to 222 (LMMHAGVGTALGGVMTMVGEP), 238 to 258 (FFLRMSPVTVPVLICGLLTCL), 303 to 323 (AIIGVWLVTALALHLAEVGLI), 348 to 368 (TESLPFTALLTVFFSVVAVII), 391 to 411 (LFYIFNGLLSSISDNVFVGTI), 447 to 467 (ATPNGQAAFLFLLTSALAPLI), and 475 to 495 (VWMALPYTLVLTLVGLLCVEF).

The protein belongs to the NhaB Na(+)/H(+) (TC 2.A.34) antiporter family.

The protein resides in the cell inner membrane. The catalysed reaction is 2 Na(+)(in) + 3 H(+)(out) = 2 Na(+)(out) + 3 H(+)(in). Na(+)/H(+) antiporter that extrudes sodium in exchange for external protons. The polypeptide is Na(+)/H(+) antiporter NhaB (Escherichia coli (strain SMS-3-5 / SECEC)).